A 946-amino-acid polypeptide reads, in one-letter code: Structure-specific endonuclease subunit SLX4 (946 aa).

Positions 1-14 (MPASPLPALSPPAS) are enriched in pro residues. Disordered regions lie at residues 1–35 (MPASPLPALSPPASPRRNTSGASALGSRKADIPPD), 54–119 (QHFD…EEAV), 147–318 (PSDE…GGFT), 339–399 (ADSA…AAQL), 416–471 (TKVP…PKHI), 577–748 (FPLL…GSGR), and 765–799 (ALSPTPPRIHNFENSQPLPLYSVSPTRAKKPKADS). Positions 54-74 (QHFDDDIAGKDQEQSRKKSPE) are enriched in basic and acidic residues. 2 stretches are compositionally biased toward basic residues: residues 160 to 169 (KAGKPRKPRA) and 182 to 195 (KPKRTRVTKPKAAK). The segment covering 278–287 (AVSRRRDWTP) has biased composition (basic and acidic residues). A compositionally biased stretch (basic residues) spans 453–469 (SKARSKKASTKAAAKPK). The span at 627 to 636 (KANDEPDHVM) shows a compositional bias: basic and acidic residues. Residues 707–717 (KSQSAIATSGS) are compositionally biased toward polar residues. A compositionally biased stretch (basic and acidic residues) spans 722 to 733 (KEPKRTKGKEVK).

It belongs to the SLX4 family. In terms of assembly, forms a heterodimer with SLX1. Phosphorylated in response to DNA damage.

It localises to the nucleus. Regulatory subunit of the SLX1-SLX4 structure-specific endonuclease that resolves DNA secondary structures generated during DNA repair and recombination. Has endonuclease activity towards branched DNA substrates, introducing single-strand cuts in duplex DNA close to junctions with ss-DNA. The sequence is that of Structure-specific endonuclease subunit SLX4 from Phaeosphaeria nodorum (strain SN15 / ATCC MYA-4574 / FGSC 10173) (Glume blotch fungus).